Consider the following 129-residue polypeptide: Protein BEX2 (129 aa).

The interval 1–37 (MESKVEQGVKNLNMENDHQEKEEKEEKPQDASKRDPI) is disordered. The segment covering 15–36 (ENDHQEKEEKEEKPQDASKRDP) has biased composition (basic and acidic residues). Position 51 is an omega-N-methylarginine (R51). The segment at 118–122 (HHDHH) is his cluster. Position 126 (C126) interacts with Zn(2+).

It belongs to the BEX family. As to quaternary structure, interacts with LMO2, possibly leading to regulate the transcriptional activity of a DNA-binding complex containing LMO2. Interacts with OMP. Primarily localized to neuronal cells within several regions of the brain, including the olfactory epithelium, bulb, peri/paraventricular nuclei, suprachiasmatic nucleus, arcuate nucleus, median eminence, lateral hypothalamic area, thalamus, hippocampus and cerebellum (at protein level).

It is found in the cytoplasm. The protein resides in the nucleus. Regulator of mitochondrial apoptosis and G1 cell cycle. Regulates the level of PP2A regulatory subunit B and PP2A phosphatase activity. In absence of reductive stress, acts as a pseudosubstrate for the CRL2(FEM1B) complex: associates with FEM1B via zinc, thereby preventing association between FEM1B and its substrates. This is Protein BEX2 from Mus musculus (Mouse).